The primary structure comprises 274 residues: Cytochrome b-c1 complex subunit Rieske, mitochondrial (274 aa).

Topologically, residues 79 to 103 (SHTDIKVPDFSDYRRSEVLDKTKSS) are mitochondrial matrix. Residues 104-140 (RESSDARKGFSYLVTAATAVGVTYAAKSIVTQFVSSM) form a helical membrane-spanning segment. The Mitochondrial intermembrane segment spans residues 141–274 (SASADVLAMS…FTGDDMVIVG (134 aa)). A Rieske domain is found at 187–272 (EAAVELSQLR…YEFTGDDMVI (86 aa)). [2Fe-2S] cluster-binding residues include Cys-217, His-219, Cys-236, His-239, and Ser-241. Cys-222 and Cys-238 are oxidised to a cystine.

Belongs to the Rieske iron-sulfur protein family. In terms of assembly, component of the ubiquinol-cytochrome c oxidoreductase (cytochrome b-c1 complex, complex III, CIII), a multisubunit enzyme composed of 11 subunits. The complex is composed of 3 respiratory subunits cytochrome b, cytochrome c1 and Rieske protein UQCRFS1, 2 core protein subunits UQCRC1/QCR1 and UQCRC2/QCR2, and 6 low-molecular weight protein subunits UQCRH/QCR6, UQCRB/QCR7, UQCRQ/QCR8, UQCR10/QCR9, UQCR11/QCR10 and subunit 9, the cleavage product of Rieske protein UQCRFS1. The complex exists as an obligatory dimer and forms supercomplexes (SCs) in the inner mitochondrial membrane with NADH-ubiquinone oxidoreductase (complex I, CI) and cytochrome c oxidase (complex IV, CIV), resulting in different assemblies (supercomplex SCI(1)III(2)IV(1) and megacomplex MCI(2)III(2)IV(2)). Incorporation of the Rieske protein UQCRFS1 is the penultimate step in complex III assembly. Interacts with TTC19, which is involved in the clearance of UQCRFS1 fragments. Component of the ubiquinol-cytochrome c oxidoreductase (cytochrome b-c1 complex, complex III, CIII). Subunit 9 corresponds to the mitochondrial targeting sequence (MTS) of Rieske protein UQCRFS1. It is retained after processing and incorporated inside complex III, where it remains bound to the complex and localizes between the 2 core subunits UQCRC1/QCR1 and UQCRC2/QCR2. [2Fe-2S] cluster serves as cofactor. In terms of processing, proteolytic processing is necessary for the correct insertion of UQCRFS1 in the complex III dimer. Several fragments are generated during UQCRFS1 insertion, most probably due to the endogenous matrix-processing peptidase (MPP) activity of the 2 core protein subunits UQCRC1/QCR1 and UQCRC2/QCR2, which are homologous to the 2 mitochondrial-processing peptidase (MPP) subunits beta-MPP and alpha-MPP respectively. The action of the protease is also necessary for the clearance of the UQCRFS1 fragments.

The protein localises to the mitochondrion inner membrane. It carries out the reaction a quinol + 2 Fe(III)-[cytochrome c](out) = a quinone + 2 Fe(II)-[cytochrome c](out) + 2 H(+)(out). Functionally, component of the ubiquinol-cytochrome c oxidoreductase, a multisubunit transmembrane complex that is part of the mitochondrial electron transport chain which drives oxidative phosphorylation. The respiratory chain contains 3 multisubunit complexes succinate dehydrogenase (complex II, CII), ubiquinol-cytochrome c oxidoreductase (cytochrome b-c1 complex, complex III, CIII) and cytochrome c oxidase (complex IV, CIV), that cooperate to transfer electrons derived from NADH and succinate to molecular oxygen, creating an electrochemical gradient over the inner membrane that drives transmembrane transport and the ATP synthase. The cytochrome b-c1 complex catalyzes electron transfer from ubiquinol to cytochrome c, linking this redox reaction to translocation of protons across the mitochondrial inner membrane, with protons being carried across the membrane as hydrogens on the quinol. In the process called Q cycle, 2 protons are consumed from the matrix, 4 protons are released into the intermembrane space and 2 electrons are passed to cytochrome c. The Rieske protein is a catalytic core subunit containing a [2Fe-2S] iron-sulfur cluster. It cycles between 2 conformational states during catalysis to transfer electrons from the quinol bound in the Q(0) site in cytochrome b to cytochrome c1. Incorporation of UQCRFS1 is the penultimate step in complex III assembly. Component of the ubiquinol-cytochrome c oxidoreductase (cytochrome b-c1 complex, complex III, CIII). UQCRFS1 undergoes proteolytic processing once it is incorporated in the complex III dimer. One of the fragments, called subunit 9, corresponds to its mitochondrial targeting sequence (MTS). The proteolytic processing is necessary for the correct insertion of UQCRFS1 in the complex III dimer, but the persistence of UQCRFS1-derived fragments may prevent newly imported UQCRFS1 to be processed and assembled into complex III and is detrimental for the complex III structure and function. The protein is Cytochrome b-c1 complex subunit Rieske, mitochondrial (UQCRFS1) of Lagothrix lagotricha (Brown woolly monkey).